Consider the following 155-residue polypeptide: Vasotocin-neurophysin VT 1 (155 aa).

The first 20 residues, 1 to 20 (MPDSTIPLLCVLGLLALSSA), serve as a signal peptide directing secretion. A disulfide bridge links Cys21 with Cys26. The residue at position 29 (Gly29) is a Glycine amide. 7 disulfide bridges follow: Cys41–Cys85, Cys44–Cys58, Cys52–Cys75, Cys59–Cys65, Cys92–Cys105, Cys99–Cys117, and Cys106–Cys111.

Belongs to the vasopressin/oxytocin family. Seven disulfide bonds are present in neurophysin.

It is found in the secreted. In terms of biological role, vasotocin is probably an antidiuretic hormone. In Oncorhynchus masou (Cherry salmon), this protein is Vasotocin-neurophysin VT 1.